The chain runs to 398 residues: Bifunctional enzyme IspD/IspF (398 aa).

Residues 1–234 (MAKSQRTAVV…ARLAAQLGDI (234 aa)) form a 2-C-methyl-D-erythritol 4-phosphate cytidylyltransferase region. The interval 235–398 (RTGTGYDVHA…LPFNEKTWSV (164 aa)) is 2-C-methyl-D-erythritol 2,4-cyclodiphosphate synthase. A divalent metal cation contacts are provided by Asp-241 and His-243. 4-CDP-2-C-methyl-D-erythritol 2-phosphate-binding positions include 241-243 (DVH) and 267-268 (HS). Position 275 (His-275) interacts with a divalent metal cation. 4-CDP-2-C-methyl-D-erythritol 2-phosphate contacts are provided by residues 289–291 (DIG), 365–368 (TTSE), Phe-372, and Arg-375.

It in the N-terminal section; belongs to the IspD/TarI cytidylyltransferase family. IspD subfamily. The protein in the C-terminal section; belongs to the IspF family. A divalent metal cation is required as a cofactor.

The catalysed reaction is 2-C-methyl-D-erythritol 4-phosphate + CTP + H(+) = 4-CDP-2-C-methyl-D-erythritol + diphosphate. The enzyme catalyses 4-CDP-2-C-methyl-D-erythritol 2-phosphate = 2-C-methyl-D-erythritol 2,4-cyclic diphosphate + CMP. Its pathway is isoprenoid biosynthesis; isopentenyl diphosphate biosynthesis via DXP pathway; isopentenyl diphosphate from 1-deoxy-D-xylulose 5-phosphate: step 2/6. The protein operates within isoprenoid biosynthesis; isopentenyl diphosphate biosynthesis via DXP pathway; isopentenyl diphosphate from 1-deoxy-D-xylulose 5-phosphate: step 4/6. Bifunctional enzyme that catalyzes the formation of 4-diphosphocytidyl-2-C-methyl-D-erythritol from CTP and 2-C-methyl-D-erythritol 4-phosphate (MEP) (IspD), and catalyzes the conversion of 4-diphosphocytidyl-2-C-methyl-D-erythritol 2-phosphate (CDP-ME2P) to 2-C-methyl-D-erythritol 2,4-cyclodiphosphate (ME-CPP) with a corresponding release of cytidine 5-monophosphate (CMP) (IspF). This chain is Bifunctional enzyme IspD/IspF, found in Bradyrhizobium diazoefficiens (strain JCM 10833 / BCRC 13528 / IAM 13628 / NBRC 14792 / USDA 110).